A 398-amino-acid polypeptide reads, in one-letter code: 1-deoxy-D-xylulose 5-phosphate reductoisomerase (398 aa).

Residues Thr10, Gly11, Ser12, Ile13, Gly36, Lys37, Asn38, and Asn124 each contribute to the NADPH site. 1-deoxy-D-xylulose 5-phosphate is bound at residue Lys125. Residue Glu126 participates in NADPH binding. Position 150 (Asp150) interacts with Mn(2+). 4 residues coordinate 1-deoxy-D-xylulose 5-phosphate: Ser151, Glu152, Ser186, and His209. Residue Glu152 participates in Mn(2+) binding. Gly215 lines the NADPH pocket. 1-deoxy-D-xylulose 5-phosphate is bound by residues Ser222, Asn227, Lys228, and Glu231. Residue Glu231 coordinates Mn(2+).

Belongs to the DXR family. Homodimer. It depends on Mg(2+) as a cofactor. The cofactor is Mn(2+).

It catalyses the reaction 2-C-methyl-D-erythritol 4-phosphate + NADP(+) = 1-deoxy-D-xylulose 5-phosphate + NADPH + H(+). It functions in the pathway isoprenoid biosynthesis; isopentenyl diphosphate biosynthesis via DXP pathway; isopentenyl diphosphate from 1-deoxy-D-xylulose 5-phosphate: step 1/6. Functionally, catalyzes the NADPH-dependent rearrangement and reduction of 1-deoxy-D-xylulose-5-phosphate (DXP) to 2-C-methyl-D-erythritol 4-phosphate (MEP). This is 1-deoxy-D-xylulose 5-phosphate reductoisomerase from Shigella flexneri.